Reading from the N-terminus, the 550-residue chain is Methyl-accepting chemotaxis protein PcaY (550 aa).

Residues 1 to 19 (MVPTRSTARMLANLKIRTG) are Cytoplasmic-facing. The helical transmembrane segment at 20–40 (MFWVLSLFSLTLLFSTASAWW) threads the bilayer. Over 41–198 (AALGSDQQIT…ESDRRLARAQ (158 aa)) the chain is Periplasmic. The tract at residues 44–196 (GSDQQITELD…MLESDRRLAR (153 aa)) is ligand-binding domain. Arginine 71 and asparagine 75 together coordinate benzoate. 3 residues coordinate salicylate: arginine 71, asparagine 75, and tyrosine 135. 71-78 (RSSANVSS) contacts 3,4-dihydroxybenzoate. L-quinate-binding positions include 71-78 (RSSANVSS), tyrosine 135, glutamine 142, and asparagine 158. Glutamine 169 provides a ligand contact to 3,4-dihydroxybenzoate. The helical transmembrane segment at 199–219 (LLSLCLLGVTVVLAVLCWAFI) threads the bilayer. Residues 220–550 (AQRVLHPLRE…MTALVGRFKV (331 aa)) are Cytoplasmic-facing. An HAMP domain is found at 221–273 (QRVLHPLREAGGHFRRIASGDLSVPVQGQGNNEIGQLFHELQRMQQSQRDTLG). One can recognise a Methyl-accepting transducer domain in the interval 278–514 (CARQLDAAAT…EVDRNLLNIR (237 aa)).

This sequence belongs to the methyl-accepting chemotaxis (MCP) protein family. In terms of assembly, ligand free PcaY_PP-ligand-binding domain (LBD) is present in a monomer-dimer equilibrium. Only the dimeric LBD is able to bind ligands which in turn causes dimer stabilization.

It is found in the cell inner membrane. Functionally, chemotactic-signal transducers respond to changes in the concentration of attractants and repellents in the environment, transduce a signal from the outside to the inside of the cell, and facilitate sensory adaptation through the variation of the level of methylation. PcaY recognizes a wide range of compounds containing a C6-membered ring with a carboxylate group. Binds preferentially compounds that serve as carbon sources and among them those that rapidly promote growth. Tightest binding compounds are quinate, shikimate, 3-dehydroshikimate and protocatechuate, which are at the interception of the biosynthetic shikimate and catabolic quinate pathways. This Pseudomonas putida (strain ATCC 47054 / DSM 6125 / CFBP 8728 / NCIMB 11950 / KT2440) protein is Methyl-accepting chemotaxis protein PcaY.